We begin with the raw amino-acid sequence, 411 residues long: CinA-like protein (411 aa).

It belongs to the CinA family.

The sequence is that of CinA-like protein from Dictyoglomus turgidum (strain DSM 6724 / Z-1310).